We begin with the raw amino-acid sequence, 311 residues long: tRNA dimethylallyltransferase (311 aa).

9 to 16 contributes to the ATP binding site; the sequence is GPTAVGKT. Substrate is bound at residue 11–16; the sequence is TAVGKT. The segment at 34 to 37 is interaction with substrate tRNA; that stretch reads DSMQ.

This sequence belongs to the IPP transferase family. Monomer. The cofactor is Mg(2+).

It catalyses the reaction adenosine(37) in tRNA + dimethylallyl diphosphate = N(6)-dimethylallyladenosine(37) in tRNA + diphosphate. Catalyzes the transfer of a dimethylallyl group onto the adenine at position 37 in tRNAs that read codons beginning with uridine, leading to the formation of N6-(dimethylallyl)adenosine (i(6)A). This is tRNA dimethylallyltransferase from Clostridium botulinum (strain Okra / Type B1).